The chain runs to 405 residues: Tryptophan synthase beta chain (405 aa).

Lys-98 bears the N6-(pyridoxal phosphate)lysine mark.

The protein belongs to the TrpB family. Tetramer of two alpha and two beta chains. It depends on pyridoxal 5'-phosphate as a cofactor.

The enzyme catalyses (1S,2R)-1-C-(indol-3-yl)glycerol 3-phosphate + L-serine = D-glyceraldehyde 3-phosphate + L-tryptophan + H2O. It participates in amino-acid biosynthesis; L-tryptophan biosynthesis; L-tryptophan from chorismate: step 5/5. The beta subunit is responsible for the synthesis of L-tryptophan from indole and L-serine. This Methylococcus capsulatus (strain ATCC 33009 / NCIMB 11132 / Bath) protein is Tryptophan synthase beta chain.